Consider the following 418-residue polypeptide: UDP-N-acetylglucosamine 1-carboxyvinyltransferase (418 aa).

Phosphoenolpyruvate is bound at residue K22–N23. R92 contributes to the UDP-N-acetyl-alpha-D-glucosamine binding site. C116 acts as the Proton donor in catalysis. C116 bears the 2-(S-cysteinyl)pyruvic acid O-phosphothioketal mark. UDP-N-acetyl-alpha-D-glucosamine contacts are provided by residues R121–L125, D305, and L327.

Belongs to the EPSP synthase family. MurA subfamily.

It localises to the cytoplasm. The catalysed reaction is phosphoenolpyruvate + UDP-N-acetyl-alpha-D-glucosamine = UDP-N-acetyl-3-O-(1-carboxyvinyl)-alpha-D-glucosamine + phosphate. It participates in cell wall biogenesis; peptidoglycan biosynthesis. In terms of biological role, cell wall formation. Adds enolpyruvyl to UDP-N-acetylglucosamine. This Campylobacter jejuni subsp. jejuni serotype O:6 (strain 81116 / NCTC 11828) protein is UDP-N-acetylglucosamine 1-carboxyvinyltransferase.